Reading from the N-terminus, the 430-residue chain is Adenylosuccinate synthetase (430 aa).

GTP contacts are provided by residues 12–18 and 40–42; these read GDEGKGK and GHT. The active-site Proton acceptor is the aspartate 13. Mg(2+)-binding residues include aspartate 13 and glycine 40. IMP contacts are provided by residues 13–16, 38–41, threonine 130, arginine 144, glutamine 224, threonine 239, and arginine 303; these read DEGK and NAGH. Histidine 41 (proton donor) is an active-site residue. Residue 299–305 participates in substrate binding; that stretch reads TNTGRAR. GTP contacts are provided by residues arginine 305, 331–333, and 413–415; these read KLD and STS.

It belongs to the adenylosuccinate synthetase family. As to quaternary structure, homodimer. Requires Mg(2+) as cofactor.

It is found in the cytoplasm. The catalysed reaction is IMP + L-aspartate + GTP = N(6)-(1,2-dicarboxyethyl)-AMP + GDP + phosphate + 2 H(+). Its pathway is purine metabolism; AMP biosynthesis via de novo pathway; AMP from IMP: step 1/2. In terms of biological role, plays an important role in the de novo pathway of purine nucleotide biosynthesis. Catalyzes the first committed step in the biosynthesis of AMP from IMP. The polypeptide is Adenylosuccinate synthetase (Hyphomonas neptunium (strain ATCC 15444)).